Consider the following 1357-residue polypeptide: Vascular endothelial growth factor receptor 3 (1357 aa).

The N-terminal stretch at 1-24 (MKRDFTFFCRIWIGIPFFSGLVNG) is a signal peptide. 7 Ig-like C2-type domains span residues 25-121 (FSMS…YYRC), 138-244 (IFVF…VQVI), 255-343 (PEDS…RELT), 352-442 (PFIS…LNFT), 453-583 (EKEA…TTIP), 583-690 (PEGF…HRKY), and 699-785 (PRYR…ATVS). At 25 to 796 (FSMSPPTLDN…IGSDDKTNVE (772 aa)) the chain is on the extracellular side. 5 N-linked (GlcNAc...) asparagine glycosylation sites follow: Asn44, Asn48, Asn114, Asn216, and Asn271. Cystine bridges form between Cys51–Cys121 and Cys173–Cys225. An intrachain disulfide couples Cys272 to Cys331. Asn360, Asn400, and Asn440 each carry an N-linked (GlcNAc...) asparagine glycan. Cystine bridges form between Cys473–Cys562, Cys493–Cys514, and Cys606–Cys674. Asn553, Asn610, Asn660, Asn707, Asn711, and Asn751 each carry an N-linked (GlcNAc...) asparagine glycan. A disulfide bridge connects residues Cys720 and Cys772. The helical transmembrane segment at 797 to 817 (IVILIGTGVIAIFFWVLLLVI) threads the bilayer. Over 818 to 1357 (FCNVKRVNPA…DYFSSSDQAV (540 aa)) the chain is Cytoplasmic. Residues 866–1181 (LRLGKVLGHG…ALVEILGDLL (316 aa)) form the Protein kinase domain. ATP contacts are provided by residues 872-880 (LGHGAFGKV) and Lys900. Positions 978-1007 (QSQVRRMIEAGQASQSEHQPSTSSTNPPRV) are disordered. Residues 989–1005 (QASQSEHQPSTSSTNPP) are compositionally biased toward polar residues. Asp1045 acts as the Proton acceptor in catalysis. Phosphotyrosine; by autocatalysis is present on residues Tyr1071 and Tyr1076. The tract at residues 1192 to 1212 (NVSQSSEDDGFSQASSRPPSQ) is disordered. A phosphotyrosine; by autocatalysis mark is found at Tyr1226, Tyr1227, Tyr1334, and Tyr1338.

The protein belongs to the protein kinase superfamily. Tyr protein kinase family. CSF-1/PDGF receptor subfamily. Interacts with vegfc and vegfd. Monomer in the absence of bound vegfc or vegfd. Homodimer in the presence of bound vegfc or vegfd. In terms of processing, autophosphorylated on tyrosine residues upon ligand binding. Autophosphorylation occurs in trans, i.e. one subunit of the dimeric receptor phosphorylates tyrosine residues on the other subunit.

The protein resides in the cell membrane. Its subcellular location is the cytoplasm. The protein localises to the nucleus. It carries out the reaction L-tyrosyl-[protein] + ATP = O-phospho-L-tyrosyl-[protein] + ADP + H(+). With respect to regulation, present in an inactive conformation in the absence of bound ligand. Binding of vegfc or vegfd leads to dimerization and activation by autophosphorylation on tyrosine residues. Functionally, tyrosine-protein kinase that acts as a cell-surface receptor for vegf or vegfc. Combinations of multiple VEGF receptors are required for development of different blood vessel types in the embryo. Involved in angiogenesis, specifically in VEGF-induced sprouting of new blood vessels, but not required for proper vasculogenesis or hematopoiesis. This Danio rerio (Zebrafish) protein is Vascular endothelial growth factor receptor 3 (flt4).